The primary structure comprises 75 residues: Phytosulfokines 3 (75 aa).

An N-terminal signal peptide occupies residues 1-22; the sequence is MSPKVIAICLVALLLPISISHG. Positions 23–66 are excised as a propeptide; it reads GRIGPIEPSKASSKVVERGNYDGRVEGCEEDDCLVERLLVAHLD. A sulfotyrosine mark is found at Tyr-67 and Tyr-69. A propeptide spanning residues 72 to 75 is cleaved from the precursor; it reads GKHN.

Belongs to the phytosulfokine family. In terms of processing, sulfation is important for activity and for the binding to a putative membrane receptor. PSK-alpha is produced by endopeptidase digestion. PSK-beta is produced from PSK-alpha by exopeptidase digestion.

Its subcellular location is the secreted. Promotes plant cell differentiation, organogenesis and somatic embryogenesis as well as cell proliferation. The polypeptide is Phytosulfokines 3 (PSK3) (Oryza sativa subsp. japonica (Rice)).